We begin with the raw amino-acid sequence, 1075 residues long: Nuclear factor of activated T-cells, cytoplasmic 3 (1075 aa).

Residue Thr2 is modified to N-acetylthreonine. A disordered region spans residues Phe18 to Glu37. The segment at Pro109–Thr114 is calcineurin-binding. The tract at residues Leu205–Thr306 is disordered. Tandem repeats lie at residues Ser207–Glu223 and Ser236–Glu252. The segment at Ser207–Asp308 is 3 X SP repeats. Over residues Ser236 to Asn253 the composition is skewed to polar residues. Over residues Ser256–Pro270 the composition is skewed to low complexity. The Nuclear localization signal signature appears at Lys273 to Arg275. Copy 3 of the repeat occupies Ser292–Asp308. Ser344 and Ser372 each carry phosphoserine. The RHD domain maps to Ser415–Ala596. Residues Arg444–Gly451 mediate DNA binding. A Nuclear localization signal motif is present at residues Lys686–Lys688. 2 disordered regions span residues Asp711 to Ser739 and Ser887 to Ala988. Polar residues-rich tracts occupy residues Ala724 to Ser739 and Ser887 to Pro912. Composition is skewed to low complexity over residues Gly916–Leu939 and Pro949–Thr967. The segment covering His970 to Thr981 has biased composition (polar residues). Residues Thr1032–Gly1041 carry the Nuclear export signal motif. Residues Val1049–Leu1075 are disordered. Ser1063 and Ser1066 each carry phosphoserine.

NFATC proteins bind to DNA as monomers. Member of the multicomponent NFATC transcription complex that consists of at least two components, a pre-existing cytoplasmic component NFATC2 and an inducible nuclear component NFATC1. Other members such as NFATC4, or members of the activating protein-1 family, MAF, GATA4 and Cbp/p300 can also bind the complex. Component of a promoter-binding complex composed of STAT3, NFATC3 and NFATC4; complex formation is enhanced by calcineurin. Interacts with TRIM17; this interaction prevents NFATC3 nuclear localization. Interacts with and ubiquitinated by STUB1/CHIP; HSPA1A/HSP70 is required as a co-chaperone. In terms of processing, ubiquitinated by STUB1/CHIP, leading to proteasomal degradation. Post-translationally, phosphorylated by NFATC-kinase; dephosphorylated by calcineurin. In terms of tissue distribution, predominantly expressed in thymus and is also found in peripheral blood leukocytes and kidney. As to expression, predominantly expressed in skeletal muscle. Also found weakly expressed in the thymus, kidney, testis, spleen, prostate, ovary, small intestine, heart, placenta and pancreas. Expressed in thymus and kidney. In terms of tissue distribution, expressed in thymus and skeletal muscle.

Its subcellular location is the cytoplasm. It localises to the nucleus. In terms of biological role, acts as a regulator of transcriptional activation. Binds to the TNFSF11/RANKL promoter region and promotes TNFSF11 transcription. Binding to the TNFSF11 promoter region is increased by high levels of Ca(2+) which induce NFATC3 expression and may lead to regulation of TNFSF11 expression in osteoblasts. Plays a role in promoting mesenteric arterial wall remodeling in response to the intermittent hypoxia-induced increase in EDN1 and ROCK signaling. As a result NFATC3 colocalizes with F-actin filaments, translocates to the nucleus and promotes transcription of the smooth muscle hypertrophy and differentiation marker ACTA2. Promotes lipopolysaccharide-induced apoptosis and hypertrophy in cardiomyocytes. Following JAK/STAT signaling activation and as part of a complex with NFATC4 and STAT3, binds to the alpha-beta E4 promoter region of CRYAB and activates transcription in cardiomyocytes. In conjunction with NFATC4, involved in embryonic heart development via maintenance of cardiomyocyte survival, proliferation and differentiation. Plays a role in the inducible expression of cytokine genes in T-cells, especially in the induction of the IL-2. Required for thymocyte maturation during DN3 to DN4 transition and during positive selection. Positively regulates macrophage-derived polymicrobial clearance, via binding to the promoter region and promoting transcription of NOS2 resulting in subsequent generation of nitric oxide. Involved in Ca(2+)-mediated transcriptional responses upon Ca(2+) influx via ORAI1 CRAC channels. In Homo sapiens (Human), this protein is Nuclear factor of activated T-cells, cytoplasmic 3.